The chain runs to 222 residues: Charged multivesicular body protein 4a (222 aa).

Disordered stretches follow at residues 1-21 (MSGL…TPEE) and 180-211 (VGDK…DEDE). The interval 1–116 (MSGLGRLFGK…ELAAQSMKKA (116 aa)) is interaction with phosphoinosides. The interval 1–150 (MSGLGRLFGK…QISDAISRPM (150 aa)) is intramolecular interaction with C-terminus. 2 coiled-coil regions span residues 20 to 105 (EEAI…VLRT) and 155 to 180 (DVDE…LLNV). The interval 151–222 (GFGDDVDEDE…ALKQLAEWVS (72 aa)) is intramolecular interaction with N-terminus. A Phosphoserine modification is found at Ser196.

The protein belongs to the SNF7 family. Probable core component of the endosomal sorting required for transport complex III (ESCRT-III). ESCRT-III components are thought to multimerize to form a flat lattice on the perimeter membrane of the endosome. Several assembly forms of ESCRT-III may exist that interact and act sequentially. Self-associates; overexpression leads to the assembly of filaments that curve and associate to create circular rings. Interacts with CHMP2A. Interacts with CHMP3; the interaction requires the release of CHMP4A autoinhibition. Interacts with CHMP4B. Interacts with CHMP4C. Interacts with CHMP6. Interacts with VPS4A. Interacts with PDCD6IP; the interaction is direct. As to expression, widely expressed. Expressed at higher level in heart, kidney, liver and skeletal muscle. Also expressed in brain, placenta, lung and pancreas.

It is found in the cytoplasmic vesicle membrane. Its subcellular location is the late endosome membrane. Its function is as follows. Probable core component of the endosomal sorting required for transport complex III (ESCRT-III) which is involved in multivesicular bodies (MVBs) formation and sorting of endosomal cargo proteins into MVBs. MVBs contain intraluminal vesicles (ILVs) that are generated by invagination and scission from the limiting membrane of the endosome and mostly are delivered to lysosomes enabling degradation of membrane proteins, such as stimulated growth factor receptors, lysosomal enzymes and lipids. The MVB pathway appears to require the sequential function of ESCRT-O, -I,-II and -III complexes. ESCRT-III proteins mostly dissociate from the invaginating membrane before the ILV is released. The ESCRT machinery also functions in topologically equivalent membrane fission events, such as the terminal stages of cytokinesis and the budding of enveloped viruses (HIV-1 and other lentiviruses). ESCRT-III proteins are believed to mediate the necessary vesicle extrusion and/or membrane fission activities, possibly in conjunction with the AAA ATPase VPS4. When overexpressed, membrane-assembled circular arrays of CHMP4A filaments can promote or stabilize negative curvature and outward budding. Via its interaction with PDCD6IP involved in HIV-1 p6- and p9-dependent virus release. CHMP4A/B/C are required for the exosomal release of SDCBP, CD63 and syndecan. This is Charged multivesicular body protein 4a (CHMP4A) from Homo sapiens (Human).